The sequence spans 106 residues: Biogenesis of lysosome-related organelles complex 1 subunit BLS1 (106 aa).

Belongs to the BLOC1S1 family. As to quaternary structure, component of the biogenesis of lysosome-related organelles complex-1 (BLOC-1).

The protein localises to the endosome. Its function is as follows. Component of the biogenesis of lysosome-related organelles complex-1 (BLOC-1), a complex involved in endosomal cargo sorting. This is Biogenesis of lysosome-related organelles complex 1 subunit BLS1 (BLS1) from Candida glabrata (strain ATCC 2001 / BCRC 20586 / JCM 3761 / NBRC 0622 / NRRL Y-65 / CBS 138) (Yeast).